The chain runs to 317 residues: Malate dehydrogenase (317 aa).

Residues 7 to 13 and Asp34 contribute to the NAD(+) site; that span reads GAAGGIG. 2 residues coordinate substrate: Arg81 and Arg87. Residues Asn94 and 117–119 contribute to the NAD(+) site; that span reads VTN. 2 residues coordinate substrate: Asn119 and Arg153. Catalysis depends on His177, which acts as the Proton acceptor. Met231 contributes to the NAD(+) binding site.

It belongs to the LDH/MDH superfamily. MDH type 1 family. As to quaternary structure, homodimer.

It catalyses the reaction (S)-malate + NAD(+) = oxaloacetate + NADH + H(+). Functionally, catalyzes the reversible oxidation of malate to oxaloacetate. This is Malate dehydrogenase from Actinobacillus pleuropneumoniae serotype 5b (strain L20).